A 665-amino-acid chain; its full sequence is UvrABC system protein C (665 aa).

The region spanning 16–95 is the GIY-YIG domain; the sequence is ESPGVYRFRD…IKQYDPRFNV (80 aa). Residues 208–243 enclose the UVR domain; sequence DLMVRRLEREMADASAELEFERAARLRDDLAALRRA. A disordered region spans residues 470–507; it reads EAGVESAGDPATPAGPASTGPGVPDEPRVGTLVDPTTG. Residues 475-491 show a composition bias toward low complexity; sequence SAGDPATPAGPASTGPG.

The protein belongs to the UvrC family. Interacts with UvrB in an incision complex.

It localises to the cytoplasm. Functionally, the UvrABC repair system catalyzes the recognition and processing of DNA lesions. UvrC both incises the 5' and 3' sides of the lesion. The N-terminal half is responsible for the 3' incision and the C-terminal half is responsible for the 5' incision. The chain is UvrABC system protein C from Salinispora tropica (strain ATCC BAA-916 / DSM 44818 / JCM 13857 / NBRC 105044 / CNB-440).